Consider the following 284-residue polypeptide: Riboflavin transporter (284 aa).

2 consecutive EamA domains span residues 2–129 and 141–273; these read VAAC…LIII and LLPI…SLYL. Helical transmembrane passes span 26-46, 58-78, 82-102, 115-135, 136-156, 167-187, 195-215, and 247-267; these read SVII…PLLV, FGLH…WIYA, VPIW…ILCA, LLTT…WSDS, YTVY…YSVM, ASIS…LWLA, ITAP…FTAL, and GWIV…ALII.

It belongs to the drug/metabolite transporter (DMT) superfamily. 10 TMS drug/metabolite exporter (DME) (TC 2.A.7.3) family.

The protein resides in the cell membrane. Its function is as follows. Transports riboflavin into the cell. This chain is Riboflavin transporter, found in Brucella anthropi (strain ATCC 49188 / DSM 6882 / CCUG 24695 / JCM 21032 / LMG 3331 / NBRC 15819 / NCTC 12168 / Alc 37) (Ochrobactrum anthropi).